The following is a 372-amino-acid chain: DNA replication and repair protein RecF (372 aa).

30-37 (GENGQGKT) is an ATP binding site.

The protein belongs to the RecF family.

The protein resides in the cytoplasm. The RecF protein is involved in DNA metabolism; it is required for DNA replication and normal SOS inducibility. RecF binds preferentially to single-stranded, linear DNA. It also seems to bind ATP. The sequence is that of DNA replication and repair protein RecF from Anaeromyxobacter sp. (strain K).